The sequence spans 299 residues: Secreted LysM effector ldpB (299 aa).

The first 19 residues, 1–19 (MGLTSILIAQVLFLGAANS), serve as a signal peptide directing secretion. LysM domains follow at residues 46 to 91 (WVND…SYCV), 135 to 182 (AFYK…YVCI), and 211 to 258 (KYHK…YVCV). An N-linked (GlcNAc...) asparagine glycan is attached at N154. Residues 266-283 (ATATPQPTPQPQQSSSPD) are compositionally biased toward low complexity. The tract at residues 266–288 (ATATPQPTPQPQQSSSPDQPMPQ) is disordered.

This sequence belongs to the secreted LysM effector family.

The protein resides in the secreted. It is found in the cell wall. Its subcellular location is the extracellular space. The protein localises to the extracellular matrix. Cell wall chitin of A.fumigatus recruits lung eosinophils during infection and ldpB might have a role in sequestration of chitin and act as triggers of host immunity to dampen host defense. This is Secreted LysM effector ldpB from Aspergillus fumigatus (strain ATCC MYA-4609 / CBS 101355 / FGSC A1100 / Af293) (Neosartorya fumigata).